The primary structure comprises 1057 residues: Self-sufficient cytochrome P450 monooxygenase CYP505E3 (1057 aa).

Heme is bound at residue Cys-403. A disordered region spans residues 465–488 (PSAAPFSSHARETTNASLPASPGT). The Flavodoxin-like domain occupies 494–634 (MYVLYGSNTG…AFEAWETKLW (141 aa)). Residues 500-504 (SNTGT) and 578-610 (VFGC…QRLV) each bind FMN. Positions 671 to 900 (HDAALGTVIE…RASNAAFHLP (230 aa)) constitute an FAD-binding FR-type domain.

In the N-terminal section; belongs to the cytochrome P450 family. FAD is required as a cofactor. Requires FMN as cofactor. The cofactor is heme.

It catalyses the reaction 2 oxidized [cytochrome P450] + NADPH = 2 reduced [cytochrome P450] + NADP(+) + H(+). The catalysed reaction is an organic molecule + reduced [NADPH--hemoprotein reductase] + O2 = an alcohol + oxidized [NADPH--hemoprotein reductase] + H2O + H(+). It carries out the reaction dodecan-1-ol + reduced [NADPH--hemoprotein reductase] + O2 = 1,5-dodecanediol + oxidized [NADPH--hemoprotein reductase] + H2O + H(+). The enzyme catalyses dodecan-1-ol + reduced [NADPH--hemoprotein reductase] + O2 = 1,6-dodecanediol + oxidized [NADPH--hemoprotein reductase] + H2O + H(+). In terms of biological role, self-sufficient cytochrome P450 monooxygenase that catalyzes the regioselective in-chain hydroxylation of fatty alcohols (C9-15) as well as fatty acids (C9-15) at the omega-1 to omega-7 or omega-1 to omega-6 positions, respectively. Is also able to convert naphthalene to 1-naphthol and 1-naphthol further to 1,3-dihydroxynaphthalene. The sequence is that of Self-sufficient cytochrome P450 monooxygenase CYP505E3 from Phanerodontia chrysosporium (White-rot fungus).